The following is a 420-amino-acid chain: UDP-N-acetylglucosamine 1-carboxyvinyltransferase 1 (420 aa).

Position 22 to 23 (22 to 23 (KN)) interacts with phosphoenolpyruvate. R91 is a UDP-N-acetyl-alpha-D-glucosamine binding site. The Proton donor role is filled by C115. C115 carries the 2-(S-cysteinyl)pyruvic acid O-phosphothioketal modification. Residues 120 to 124 (RPMDL), D303, and V325 each bind UDP-N-acetyl-alpha-D-glucosamine.

It belongs to the EPSP synthase family. MurA subfamily.

The protein localises to the cytoplasm. It carries out the reaction phosphoenolpyruvate + UDP-N-acetyl-alpha-D-glucosamine = UDP-N-acetyl-3-O-(1-carboxyvinyl)-alpha-D-glucosamine + phosphate. The protein operates within cell wall biogenesis; peptidoglycan biosynthesis. Functionally, cell wall formation. Adds enolpyruvyl to UDP-N-acetylglucosamine. This Carboxydothermus hydrogenoformans (strain ATCC BAA-161 / DSM 6008 / Z-2901) protein is UDP-N-acetylglucosamine 1-carboxyvinyltransferase 1.